The chain runs to 279 residues: Pleckstrin homology domain-containing family F member 1 (279 aa).

The PH domain maps to valine 35 to arginine 131. An FYVE-type zinc finger spans residues aspartate 152–alanine 212. Residues cysteine 158, cysteine 161, cysteine 175, cysteine 178, cysteine 183, cysteine 186, cysteine 204, and cysteine 207 each contribute to the Zn(2+) site. Residues glutamate 218–serine 264 are disordered. The span at glycine 244 to lysine 253 shows a compositional bias: acidic residues.

Highly expressed in heart and skeletal muscle. Weakly expressed in brain, thymus, spleen, kidney, liver, small intestine, placenta and lung.

The protein resides in the nucleus. It is found in the cytoplasm. Its subcellular location is the perinuclear region. It localises to the lysosome. In terms of biological role, may induce apoptosis through the lysosomal-mitochondrial pathway. Translocates to the lysosome initiating the permeabilization of lysosomal membrane (LMP) and resulting in the release of CTSD and CTSL to the cytoplasm. Triggers the caspase-independent apoptosis by altering mitochondrial membrane permeabilization (MMP) resulting in the release of PDCD8. The protein is Pleckstrin homology domain-containing family F member 1 (PLEKHF1) of Homo sapiens (Human).